The chain runs to 335 residues: Nucleoid-associated protein KPN78578_25800 (335 aa).

Belongs to the YejK family.

Its subcellular location is the cytoplasm. The protein resides in the nucleoid. This chain is Nucleoid-associated protein KPN78578_25800, found in Klebsiella pneumoniae subsp. pneumoniae (strain ATCC 700721 / MGH 78578).